Consider the following 483-residue polypeptide: Glutamyl-tRNA(Gln) amidotransferase subunit A (483 aa).

Residues Lys76 and Ser151 each act as charge relay system in the active site. Ser175 functions as the Acyl-ester intermediate in the catalytic mechanism.

This sequence belongs to the amidase family. GatA subfamily. As to quaternary structure, heterotrimer of A, B and C subunits.

It carries out the reaction L-glutamyl-tRNA(Gln) + L-glutamine + ATP + H2O = L-glutaminyl-tRNA(Gln) + L-glutamate + ADP + phosphate + H(+). Allows the formation of correctly charged Gln-tRNA(Gln) through the transamidation of misacylated Glu-tRNA(Gln) in organisms which lack glutaminyl-tRNA synthetase. The reaction takes place in the presence of glutamine and ATP through an activated gamma-phospho-Glu-tRNA(Gln). The chain is Glutamyl-tRNA(Gln) amidotransferase subunit A from Azotobacter vinelandii (strain DJ / ATCC BAA-1303).